Reading from the N-terminus, the 90-residue chain is Small ribosomal subunit protein bS18 (90 aa).

A disordered region spans residues 1–23 (MKPMRQKNTRAQGNKSISNALAS). Polar residues predominate over residues 9 to 21 (TRAQGNKSISNAL).

It belongs to the bacterial ribosomal protein bS18 family. As to quaternary structure, part of the 30S ribosomal subunit. Forms a tight heterodimer with protein bS6.

Functionally, binds as a heterodimer with protein bS6 to the central domain of the 16S rRNA, where it helps stabilize the platform of the 30S subunit. This chain is Small ribosomal subunit protein bS18, found in Chlorobium luteolum (strain DSM 273 / BCRC 81028 / 2530) (Pelodictyon luteolum).